The sequence spans 379 residues: Junctional adhesion molecule-like (379 aa).

Residues 1–20 (MLCLLKLIVIPVILAPVGYP) form the signal peptide. The Extracellular portion of the chain corresponds to 21-281 (QGLPGLTVSS…QQGILNGNQL (261 aa)). Ig-like V-type domains are found at residues 24–135 (PGLT…KPVE) and 140–250 (PEEP…KTIV). A disulfide bridge links cysteine 45 with cysteine 119. Residues asparagine 79, asparagine 89, and asparagine 125 are each glycosylated (N-linked (GlcNAc...) asparagine). Cysteine 158 and cysteine 236 form a disulfide bridge. The helical transmembrane segment at 282–302 (VIIVGIVCATFLLLPVLILIV) threads the bilayer. Residues 303–379 (KKAKWNKSSV…SLVRSSVRSK (77 aa)) lie on the Cytoplasmic side of the membrane. Tyrosine 355 is subject to Phosphotyrosine.

It belongs to the immunoglobulin superfamily. Homodimer; active form in leukocyte-endothelial cell adhesion. Interacts (homodimeric form) with CXADR. Interacts (via cytoplasmic domain) with the PI3 kinase; upon CXADR-binding. Interacts with ITGA4 and ITGB1; integrin alpha-4/beta-1 may regulate leukocyte to endothelial cells adhesion by controlling JAML homodimerization. Expressed by gamma-delta intraepithelial T cells (at protein level).

Its subcellular location is the cell membrane. The protein localises to the cell junction. Functionally, transmembrane protein of the plasma membrane of leukocytes that control their migration and activation through interaction with CXADR, a plasma membrane receptor found on adjacent epithelial and endothelial cells. The interaction between both receptors mediates the activation of gamma-delta T-cells, a subpopulation of T-cells residing in epithelia and involved in tissue homeostasis and repair. Upon epithelial CXADR-binding, JAML induces downstream cell signaling events in gamma-delta T-cells through PI3-kinase and MAP kinases. It results in proliferation and production of cytokines and growth factors by T-cells that in turn stimulate epithelial tissues repair. It also controls the transmigration of leukocytes within epithelial and endothelial tissues through adhesive interactions with epithelial and endothelial CXADR. This Mus musculus (Mouse) protein is Junctional adhesion molecule-like.